A 497-amino-acid polypeptide reads, in one-letter code: Glycerol kinase (497 aa).

Thr-12 contributes to the ADP binding site. Positions 12, 13, and 14 each coordinate ATP. Thr-12 is a binding site for sn-glycerol 3-phosphate. Arg-16 provides a ligand contact to ADP. 4 residues coordinate sn-glycerol 3-phosphate: Arg-82, Glu-83, Tyr-134, and Asp-243. Residues Arg-82, Glu-83, Tyr-134, Asp-243, and Gln-244 each contribute to the glycerol site. Residues Thr-265 and Gly-308 each coordinate ADP. Positions 265, 308, 312, and 411 each coordinate ATP. Gly-411 serves as a coordination point for ADP.

Belongs to the FGGY kinase family.

It catalyses the reaction glycerol + ATP = sn-glycerol 3-phosphate + ADP + H(+). It participates in polyol metabolism; glycerol degradation via glycerol kinase pathway; sn-glycerol 3-phosphate from glycerol: step 1/1. With respect to regulation, inhibited by fructose 1,6-bisphosphate (FBP). In terms of biological role, key enzyme in the regulation of glycerol uptake and metabolism. Catalyzes the phosphorylation of glycerol to yield sn-glycerol 3-phosphate. The polypeptide is Glycerol kinase (Sinorhizobium fredii (strain NBRC 101917 / NGR234)).